The chain runs to 893 residues: Beta-adaptin-like protein C (893 aa).

The tract at residues 593–621 (TEDEDYVEGSETGYPEASGNPVDGAASPS) is disordered.

The protein belongs to the adaptor complexes large subunit family. In terms of assembly, adaptor protein complexes are heterotetramers composed of two large adaptins (beta-type subunit and alpha-type or delta-type or epsilon-type or gamma-type subunit), a medium adaptin (mu-type subunit) and a small adaptin (sigma-type subunit).

The protein localises to the golgi apparatus. It localises to the trans-Golgi network. It is found in the cytoplasmic vesicle. Its subcellular location is the clathrin-coated vesicle membrane. Its function is as follows. Subunit of clathrin-associated adaptor protein complex that plays a role in protein sorting in the late-Golgi/trans-Golgi network (TGN) and/or endosomes. The AP complexes mediate both the recruitment of clathrin to membranes and the recognition of sorting signals within the cytosolic tails of transmembrane cargo molecules. This is Beta-adaptin-like protein C (BETAC-AD) from Arabidopsis thaliana (Mouse-ear cress).